Consider the following 183-residue polypeptide: UPF0398 protein BLi02355/BL05236 (183 aa).

It belongs to the UPF0398 family.

In Bacillus licheniformis (strain ATCC 14580 / DSM 13 / JCM 2505 / CCUG 7422 / NBRC 12200 / NCIMB 9375 / NCTC 10341 / NRRL NRS-1264 / Gibson 46), this protein is UPF0398 protein BLi02355/BL05236.